Reading from the N-terminus, the 157-residue chain is Protein FAM218A (157 aa).

The disordered stretch occupies residues 104–127; it reads PAVTPPKLPGHSKSEGPPGKVRKR.

In Homo sapiens (Human), this protein is Protein FAM218A (FAM218A).